We begin with the raw amino-acid sequence, 417 residues long: Membrane protein UL43 (417 aa).

Residues 1–21 (MLRNDSHRAVSPEDGQGRVDD) are disordered. 5 consecutive transmembrane segments (helical) span residues 57–77 (GPYA…LGFM), 90–110 (IYAW…SLGE), 119–139 (APGP…LLVL), 146–166 (LFLL…VGGL), and 175–195 (WWIG…GPGA). The interval 217–254 (AGESLSRRPPEDPERPGVPGPPSPPTPQRSHGPPADEV) is disordered. Basic and acidic residues predominate over residues 221–231 (LSRRPPEDPER). The span at 232-243 (PGVPGPPSPPTP) shows a compositional bias: pro residues. 5 helical membrane-spanning segments follow: residues 263-283 (ENVW…VKTV), 291-311 (PGPG…AVAL), 323-343 (LTDP…GLVF), 348-368 (VVVY…VLGL), and 389-409 (GLFF…CPPG).

This sequence belongs to the alphaherpesvirinae HHV-1 UL43 family.

The protein localises to the membrane. The sequence is that of Membrane protein UL43 from Human herpesvirus 1 (strain 17) (HHV-1).